Consider the following 367-residue polypeptide: Alanine racemase (367 aa).

The Proton acceptor; specific for D-alanine role is filled by Lys-40. Lys-40 bears the N6-(pyridoxal phosphate)lysine mark. Arg-136 provides a ligand contact to substrate. Residue Tyr-263 is the Proton acceptor; specific for L-alanine of the active site. Met-310 provides a ligand contact to substrate.

The protein belongs to the alanine racemase family. Pyridoxal 5'-phosphate is required as a cofactor.

The enzyme catalyses L-alanine = D-alanine. Its pathway is amino-acid biosynthesis; D-alanine biosynthesis; D-alanine from L-alanine: step 1/1. Functionally, catalyzes the interconversion of L-alanine and D-alanine. May also act on other amino acids. The polypeptide is Alanine racemase (alr) (Streptococcus pneumoniae (strain 70585)).